The primary structure comprises 379 residues: L-demethylnoviosyl transferase (379 aa).

Belongs to the glycosyltransferase 28 family.

It carries out the reaction dTDP-4-O-demethyl-beta-L-noviose + novobiocic acid = desmethyldescarbamoylnovobiocin + dTDP + H(+). The protein operates within antibiotic biosynthesis; novobiocin biosynthesis. Inhibited by TDP-L-rhamnose, the sugar donor that most closely structurally resembles the natural substrate dTDP-beta-L-noviose. In terms of biological role, catalyzes the transfer of L-noviose from dTDP-4-O-demethyl-beta-L-noviose to the phenolic oxygen of novobiocic acid, creating the full ABC ring system in the novobiocin biosynthesis pathway. Novobiocin is an aminocoumarin family antibiotic that targets bacterial DNA gyrases. Also shows activity with variant coumarin aglycones, suggesting it may be a promiscuous catalyst for noviosylation of a range of planar scaffolds. Does not show activity with TDP-L-rhamnose. This chain is L-demethylnoviosyl transferase (novM), found in Streptomyces niveus (Streptomyces spheroides).